The following is a 437-amino-acid chain: 3-ketoacyl-CoA thiolase (437 aa).

Cysteine 99 acts as the Acyl-thioester intermediate in catalysis. Residues histidine 392 and cysteine 422 each act as proton acceptor in the active site.

The protein belongs to the thiolase-like superfamily. Thiolase family. In terms of assembly, heterotetramer of two alpha chains (FadJ) and two beta chains (FadI).

The protein resides in the cytoplasm. The enzyme catalyses an acyl-CoA + acetyl-CoA = a 3-oxoacyl-CoA + CoA. It participates in lipid metabolism; fatty acid beta-oxidation. In terms of biological role, catalyzes the final step of fatty acid oxidation in which acetyl-CoA is released and the CoA ester of a fatty acid two carbons shorter is formed. In Erwinia tasmaniensis (strain DSM 17950 / CFBP 7177 / CIP 109463 / NCPPB 4357 / Et1/99), this protein is 3-ketoacyl-CoA thiolase.